Reading from the N-terminus, the 37-residue chain is Cytochrome b6-f complex subunit 5 (37 aa).

Residues 5–25 traverse the membrane as a helical segment; sequence LLDGLVLGLVFATLGGLFYAA.

This sequence belongs to the PetG family. As to quaternary structure, the 4 large subunits of the cytochrome b6-f complex are cytochrome b6, subunit IV (17 kDa polypeptide, PetD), cytochrome f and the Rieske protein, while the 4 small subunits are PetG, PetL, PetM and PetN. The complex functions as a dimer.

It is found in the cellular thylakoid membrane. Its function is as follows. Component of the cytochrome b6-f complex, which mediates electron transfer between photosystem II (PSII) and photosystem I (PSI), cyclic electron flow around PSI, and state transitions. PetG is required for either the stability or assembly of the cytochrome b6-f complex. In Mastigocladus laminosus (Fischerella sp.), this protein is Cytochrome b6-f complex subunit 5.